A 368-amino-acid polypeptide reads, in one-letter code: uncharacterized protein (368 aa).

This sequence belongs to the CdaR family.

This is an uncharacterized protein from Haemophilus influenzae (strain ATCC 51907 / DSM 11121 / KW20 / Rd).